The following is a 130-amino-acid chain: Small ribosomal subunit protein eS8 (130 aa).

The protein belongs to the eukaryotic ribosomal protein eS8 family. As to quaternary structure, part of the 30S ribosomal subunit.

This Thermococcus onnurineus (strain NA1) protein is Small ribosomal subunit protein eS8.